The following is a 201-amino-acid chain: Lipoprotein signal peptidase (201 aa).

A run of 2 helical transmembrane segments spans residues 73 to 93 and 97 to 117; these read SNAI…YLMI and TIGS…NLID. Residues Asp126 and Asp144 contribute to the active site. A helical transmembrane segment spans residues 135 to 155; it reads YSFPVFNLADCFITIGVIILI.

This sequence belongs to the peptidase A8 family.

The protein resides in the cell inner membrane. The catalysed reaction is Release of signal peptides from bacterial membrane prolipoproteins. Hydrolyzes -Xaa-Yaa-Zaa-|-(S,diacylglyceryl)Cys-, in which Xaa is hydrophobic (preferably Leu), and Yaa (Ala or Ser) and Zaa (Gly or Ala) have small, neutral side chains.. The protein operates within protein modification; lipoprotein biosynthesis (signal peptide cleavage). Functionally, this protein specifically catalyzes the removal of signal peptides from prolipoproteins. The sequence is that of Lipoprotein signal peptidase from Rickettsia africae (strain ESF-5).